Reading from the N-terminus, the 1384-residue chain is Sterol 3-beta-glucosyltransferase (1384 aa).

Disordered regions lie at residues 1–64 (MPNM…DGQL), 86–189 (ARFD…TPRA), and 204–229 (DKKQSADQPSSSTKGETDGTSEQSCA). The span at 7-19 (LLEDAKRRVDRRL) shows a compositional bias: basic and acidic residues. The segment covering 21–36 (ASRQSISSSRIFSSAF) has biased composition (low complexity). The span at 38-47 (DRLKDDHDAQ) shows a compositional bias: basic and acidic residues. Over residues 146 to 156 (LRSLKPSPKSS) the composition is skewed to low complexity. A compositionally biased stretch (polar residues) spans 158-172 (GTETTVQTEPPTSDE). The segment covering 174 to 189 (SPLASPRRARSATPRA) has biased composition (low complexity). Over residues 209–229 (ADQPSSSTKGETDGTSEQSCA) the composition is skewed to polar residues. Residues 237–284 (KEMFGFEMPEKVLMEYACSLLQNILLQGYMYVTEGHICFYAYLPRKSA) form the GRAM 1 domain. Residues 285-384 (VTIRSGYLHK…WVKALQKVIF (100 aa)) form the PH domain. Disordered regions lie at residues 457 to 526 (MKTS…RQRD) and 560 to 629 (NRSD…VNSS). 3 stretches are compositionally biased toward polar residues: residues 458-473 (KTSQLLPPPSEQTSPA), 483-494 (WSLNSDLSQSRG), and 560-572 (NRSDVFQSPTIHT). The span at 578–588 (PSGDRTGRRLS) shows a compositional bias: basic and acidic residues. The segment covering 604–629 (RNGQEMQYASSDSDQGTQHPSKVNSS) has biased composition (polar residues). Residues 714 to 817 (RFRAHFALPS…RDDCAVTVHQ (104 aa)) form the GRAM 2 domain. UDP-alpha-D-glucose is bound by residues serine 901, arginine 902, aspartate 904, alanine 1204, histidine 1206, histidine 1219, glycine 1223, threonine 1224, aspartate 1243, and glutamine 1244. Polar residues predominate over residues 1322–1336 (VSSTPFSPTPSAKTT). The tract at residues 1322–1350 (VSSTPFSPTPSAKTTAEQEEDDVDDSEEW) is disordered. A compositionally biased stretch (acidic residues) spans 1338 to 1350 (EQEEDDVDDSEEW).

It belongs to the glycosyltransferase 28 family.

It is found in the cytoplasm. Its subcellular location is the preautophagosomal structure membrane. The enzyme catalyses a sterol + UDP-alpha-D-glucose = a sterol 3-beta-D-glucoside + UDP + H(+). It carries out the reaction ergosterol + UDP-alpha-D-glucose = ergosteryl 3-beta-D-glucoside + UDP + H(+). Functionally, sterol glycosyltransferase responsible for the glycosylation of ergosterol to form ergosterol-glucoside. Involved in cytoplasm to vacuole transport (Cvt), pexophagy or nonselective autophagy. This chain is Sterol 3-beta-glucosyltransferase, found in Aspergillus oryzae (strain ATCC 42149 / RIB 40) (Yellow koji mold).